The chain runs to 320 residues: Cytosolic Fe-S cluster assembly factor NUBP1 (320 aa).

M1 is subject to N-acetylmethionine. [4Fe-4S] cluster contacts are provided by C8, C22, C25, and C31. 62–69 (GKGGVGKS) provides a ligand contact to ATP. Positions 235 and 238 each coordinate [4Fe-4S] cluster. The residue at position 319 (S319) is a Phosphoserine.

The protein belongs to the Mrp/NBP35 ATP-binding proteins family. NUBP1/NBP35 subfamily. In terms of assembly, heterotetramer of 2 NUBP1 and 2 NUBP2 chains. Interacts with KIFC1. Interacts with NUBP2. Interacts with the BBS/CCT complex subunit CCT1. The cofactor is [4Fe-4S] cluster.

It is found in the cytoplasm. Its subcellular location is the nucleus. It localises to the cell projection. The protein resides in the cytoskeleton. The protein localises to the cilium axoneme. It is found in the cilium basal body. Its subcellular location is the microtubule organizing center. It localises to the centrosome. The protein resides in the centriole. Functionally, component of the cytosolic iron-sulfur (Fe/S) protein assembly (CIA) machinery. Required for maturation of extramitochondrial Fe-S proteins. The NUBP1-NUBP2 heterotetramer forms a Fe-S scaffold complex, mediating the de novo assembly of an Fe-S cluster and its transfer to target apoproteins. Implicated in the regulation of centrosome duplication. Negatively regulates cilium formation and structure. The sequence is that of Cytosolic Fe-S cluster assembly factor NUBP1 from Homo sapiens (Human).